The following is a 184-amino-acid chain: Elongation factor P (184 aa).

This sequence belongs to the elongation factor P family.

It is found in the cytoplasm. The protein operates within protein biosynthesis; polypeptide chain elongation. Functionally, involved in peptide bond synthesis. Stimulates efficient translation and peptide-bond synthesis on native or reconstituted 70S ribosomes in vitro. Probably functions indirectly by altering the affinity of the ribosome for aminoacyl-tRNA, thus increasing their reactivity as acceptors for peptidyl transferase. The polypeptide is Elongation factor P (Delftia acidovorans (strain DSM 14801 / SPH-1)).